The primary structure comprises 290 residues: 4-hydroxy-tetrahydrodipicolinate synthase (290 aa).

T44 serves as a coordination point for pyruvate. Y131 serves as the catalytic Proton donor/acceptor. The Schiff-base intermediate with substrate role is filled by K159. I201 is a binding site for pyruvate.

This sequence belongs to the DapA family. Homotetramer; dimer of dimers.

It localises to the cytoplasm. The enzyme catalyses L-aspartate 4-semialdehyde + pyruvate = (2S,4S)-4-hydroxy-2,3,4,5-tetrahydrodipicolinate + H2O + H(+). Its pathway is amino-acid biosynthesis; L-lysine biosynthesis via DAP pathway; (S)-tetrahydrodipicolinate from L-aspartate: step 3/4. Catalyzes the condensation of (S)-aspartate-beta-semialdehyde [(S)-ASA] and pyruvate to 4-hydroxy-tetrahydrodipicolinate (HTPA). The chain is 4-hydroxy-tetrahydrodipicolinate synthase from Jannaschia sp. (strain CCS1).